The chain runs to 795 residues: Protocadherin beta-4 (795 aa).

Residues 1-27 (MKKLGRIHPNRQVLAFILMVFLSQVRL) form the signal peptide. Residues 28-689 (EPIRYSVLEE…AQADSLTVYL (662 aa)) lie on the Extracellular side of the membrane. 5 consecutive Cadherin domains span residues 34–132 (VLEE…SPIF), 137–241 (VLLK…APEF), 246–346 (YGVQ…PPEL), 351–450 (LTSS…APAF), and 455–560 (YTLF…SPFV). Asn-183 carries an N-linked (GlcNAc...) asparagine glycan. 2 N-linked (GlcNAc...) asparagine glycosylation sites follow: Asn-417 and Asn-435. Residue Asn-566 is glycosylated (N-linked (GlcNAc...) asparagine). Residues 567-670 (GSAPCTELVP…LVDGFSQPYL (104 aa)) enclose the Cadherin 6 domain. A helical membrane pass occupies residues 690–710 (VVALASVSSLFLFSVLLFVAV). Residues 711–795 (RLCRRSRAAS…PKFRNSLVFS (85 aa)) are Cytoplasmic-facing.

The protein resides in the cell membrane. Its function is as follows. Potential calcium-dependent cell-adhesion protein. May be involved in the establishment and maintenance of specific neuronal connections in the brain. This chain is Protocadherin beta-4 (PCDHB4), found in Homo sapiens (Human).